Consider the following 515-residue polypeptide: Maturase K (515 aa).

The protein belongs to the intron maturase 2 family. MatK subfamily.

It localises to the plastid. Its subcellular location is the chloroplast. Functionally, usually encoded in the trnK tRNA gene intron. Probably assists in splicing its own and other chloroplast group II introns. This chain is Maturase K, found in Pinus coulteri (Coulter pine).